Consider the following 102-residue polypeptide: Putative septation protein SpoVG 1 (102 aa).

The protein belongs to the SpoVG family.

Could be involved in septation. The polypeptide is Putative septation protein SpoVG 1 (Listeria innocua serovar 6a (strain ATCC BAA-680 / CLIP 11262)).